The primary structure comprises 510 residues: MIKHALSVTRDGDFAQWYQTVISEADMAEDSGVRGCMVIRPWGYGIWERIQRLLDDRIKATGHENCYFPLFIPLSYFEKEAEHVDGFAKEMAVVTHHRLIQKDGRLVPDPEAKLEEPLVVRPTSETVIGAAMSRWVQSWRDLPVLINQWANVVRWEMRTRMFLRTAEFLWQEGHTAHATVEEAQEETRKMLEVYRDFAETCLAMPVVAGEKPENERFPGAVSTFSIEAMMQDGKALQAGTSHFLGTTFSSAQDIKFQNSEGQFELAQTTSWGVSTRMIGGLIMVHGDDDGLRVPPMVAPWQIVIVPMLRDQPEDAATIDYCKSLQAELAKLTALGEPVRALLDLKAVKAQTKRWGWVKKGAPIVIEVGGRDVAGGNVSVIQRNKLYREDGKLDSRIMPRGDFVAEAAAILESIQQGLYLDARERLDSNIRRDVTDFDGLAAMFADSVKFPGWAEVSWAKPTGAELDAVVERLKALKLTFRNVPGTAAPAEGTCLFTGKPAVERILVARAY.

Belongs to the class-II aminoacyl-tRNA synthetase family. ProS type 3 subfamily. Homodimer.

The protein localises to the cytoplasm. It catalyses the reaction tRNA(Pro) + L-proline + ATP = L-prolyl-tRNA(Pro) + AMP + diphosphate. In terms of biological role, catalyzes the attachment of proline to tRNA(Pro) in a two-step reaction: proline is first activated by ATP to form Pro-AMP and then transferred to the acceptor end of tRNA(Pro). In Sphingomonas elodea, this protein is Proline--tRNA ligase.